We begin with the raw amino-acid sequence, 628 residues long: E3 SUMO-protein ligase PIAS3 (628 aa).

The interaction with CCAR2 stretch occupies residues 1–200; that stretch reads MAELGELKHM…QLRFCLCETS (200 aa). An SAP domain is found at 11–45; the sequence is VMSFRVSELQVLLGFAGRNKSGRKHELLAKALHLL. The LXXLL motif motif lies at 19-23; sequence LQVLL. Residues Lys-46, Lys-56, Lys-230, and Lys-307 each participate in a glycyl lysine isopeptide (Lys-Gly) (interchain with G-Cter in SUMO2) cross-link. One can recognise a PINIT domain in the interval 115-280; it reads MHPPLPQPVH…SLSVYLVRQL (166 aa). The SP-RING-type zinc finger occupies 312–393; that stretch reads PDSEVATTSL…FMEILSSCSD (82 aa). Positions 343, 345, 366, and 369 each coordinate Zn(2+). Residues 450–460 are SUMO1-binding; that stretch reads LTIESSSDEED. Residues Lys-466 and Lys-482 each participate in a glycyl lysine isopeptide (Lys-Gly) (interchain with G-Cter in SUMO2) cross-link. Residues 597–617 form a disordered region; it reads VAPGGALREGHGGPLPSGPSL.

The protein belongs to the PIAS family. In terms of assembly, monomer. Binds SUMO1 and UBE2I. Interacts with BCL11A, HMGA2, IRF1, MITF and NCOA2. Interacts with STAT5; the interaction occurs on stimulation by PRL. Interacts with GFI1; the interaction relieves the inhibitory effect of PIAS3 on STAT3-mediated transcriptional activity. Interacts with AR, PLAG1 and ZFHX3. Interacts with STAT3; the interaction occurs on stimulation by IL6, CNTF or OSM and inhibits the DNA binding activity of STAT3. Interacts with MTA1. Interacts with CCAR2 (via N-terminus). Interacts with TRIM8. Interacts with PRDM1/Blimp-1. Sumoylated. In terms of tissue distribution, widely expressed.

Its subcellular location is the cytoplasm. It is found in the nucleus. The protein resides in the nucleus speckle. It participates in protein modification; protein sumoylation. Functionally, functions as an E3-type small ubiquitin-like modifier (SUMO) ligase, stabilizing the interaction between UBE2I and the substrate, and as a SUMO-tethering factor. Plays a crucial role as a transcriptional coregulation in various cellular pathways, including the STAT pathway and the steroid hormone signaling pathway. Involved in regulating STAT3 signaling via inhibiting STAT3 DNA-binding and suppressing cell growth. Enhances the sumoylation of MTA1 and may participate in its paralog-selective sumoylation. Sumoylates CCAR2 which promotes its interaction with SIRT1. Diminishes the sumoylation of ZFHX3 by preventing the colocalization of ZFHX3 with SUMO1 in the nucleus. The sequence is that of E3 SUMO-protein ligase PIAS3 (PIAS3) from Homo sapiens (Human).